Here is a 537-residue protein sequence, read N- to C-terminus: Chaperonin GroEL (537 aa).

ATP-binding positions include 30-33, 87-91, Gly414, 477-479, and Asp493; these read TLGP, DGTTT, and DAV.

This sequence belongs to the chaperonin (HSP60) family. In terms of assembly, forms a cylinder of 14 subunits composed of two heptameric rings stacked back-to-back. Interacts with the co-chaperonin GroES.

It localises to the cytoplasm. It catalyses the reaction ATP + H2O + a folded polypeptide = ADP + phosphate + an unfolded polypeptide.. In terms of biological role, together with its co-chaperonin GroES, plays an essential role in assisting protein folding. The GroEL-GroES system forms a nano-cage that allows encapsulation of the non-native substrate proteins and provides a physical environment optimized to promote and accelerate protein folding. This is Chaperonin GroEL from Coprothermobacter proteolyticus (strain ATCC 35245 / DSM 5265 / OCM 4 / BT).